The primary structure comprises 247 residues: 23S rRNA (guanosine-2'-O-)-methyltransferase RlmB (247 aa).

The S-adenosyl-L-methionine site is built by glycine 197, isoleucine 217, and leucine 226.

The protein belongs to the class IV-like SAM-binding methyltransferase superfamily. RNA methyltransferase TrmH family. RlmB subfamily.

It localises to the cytoplasm. It carries out the reaction guanosine(2251) in 23S rRNA + S-adenosyl-L-methionine = 2'-O-methylguanosine(2251) in 23S rRNA + S-adenosyl-L-homocysteine + H(+). Its function is as follows. Specifically methylates the ribose of guanosine 2251 in 23S rRNA. The polypeptide is 23S rRNA (guanosine-2'-O-)-methyltransferase RlmB (Vibrio vulnificus (strain CMCP6)).